Consider the following 164-residue polypeptide: UPF0114 protein Sbal_0780 (164 aa).

The next 4 helical transmembrane spans lie at 15–35, 53–73, 109–129, and 136–156; these read IMAP…VKFF, LVLL…IVMV, VAAS…MNAE, and IMWY…MGYL.

It belongs to the UPF0114 family.

It is found in the cell membrane. The sequence is that of UPF0114 protein Sbal_0780 from Shewanella baltica (strain OS155 / ATCC BAA-1091).